Consider the following 71-residue polypeptide: MNMSLETRINDLETRLAFQDDTIQALNDVLVAQQRVVERLQMQLEALAKRQEELIEEFGSVDDDGAPPPHY.

Belongs to the SlyX family.

The polypeptide is Protein SlyX homolog (Azotobacter vinelandii (strain DJ / ATCC BAA-1303)).